Consider the following 327-residue polypeptide: Small ribosomal subunit protein uS4m (327 aa).

Residues serine 96–valine 154 form the S4 RNA-binding domain. The span at alanine 156 to valine 173 shows a compositional bias: polar residues. The disordered stretch occupies residues alanine 156–leucine 199. The segment covering serine 174–asparagine 186 has biased composition (basic and acidic residues).

The protein belongs to the universal ribosomal protein uS4 family. As to quaternary structure, component of the mitochondrial small ribosomal subunit (mt-SSU). Mature yeast 74S mitochondrial ribosomes consist of a small (37S) and a large (54S) subunit. The 37S small subunit contains a 15S ribosomal RNA (15S mt-rRNA) and at least 32 different proteins. The 54S large subunit contains a 21S rRNA (21S mt-rRNA) and at least 45 different proteins. uS3m, uS4m and uS5m form the narrow entry site of the mRNA channel.

The protein resides in the mitochondrion. In terms of biological role, component of the mitochondrial ribosome (mitoribosome), a dedicated translation machinery responsible for the synthesis of mitochondrial genome-encoded proteins, including at least some of the essential transmembrane subunits of the mitochondrial respiratory chain. The mitoribosomes are attached to the mitochondrial inner membrane and translation products are cotranslationally integrated into the membrane. This Schizosaccharomyces pombe (strain 972 / ATCC 24843) (Fission yeast) protein is Small ribosomal subunit protein uS4m (nam9).